The sequence spans 95 residues: Beta-defensin 132 (95 aa).

A signal peptide spans 1 to 22; the sequence is MKFLLLVLAALGFLTQVIPASG. Intrachain disulfides connect cysteine 27–cysteine 55, cysteine 35–cysteine 49, and cysteine 39–cysteine 56. A disordered region spans residues 72 to 95; that stretch reads GNHWPSRSRNTQRKNKKQQTTVTP.

Belongs to the beta-defensin family.

Its subcellular location is the secreted. Its function is as follows. Has antibacterial activity. This is Beta-defensin 132 (DEFB132) from Macaca fascicularis (Crab-eating macaque).